We begin with the raw amino-acid sequence, 613 residues long: MQKSLLAIAMASLLTPISYLHAQEVQTNDTVVVTANRFEQVESSVLASISVVTKAEIEQLNVTTALDILKTLPGVEVNSQGGKGQISSIFLRGTSSKHTLVLVDGVKINSATAGGASLGLIPAFAIEQIEVVRGPRAAIYGSDAIGGVIHIKTIPANRQTKHDANLGYGNDDHSSLAWRSSGQLNDSTQASFVFSDEKSDGYRVNEVAPSGDSHGYQSQTLFGSLRHEIDDAWSVQFNGYQLSSDVEYANQFSGVKNESNTDFYSIAGSLNFHKDNYSSQLMVSRSDNESWDGVASGMVAKTALFSSRNSVSWLNHWVVVPALTLAAGVDYDQENARQGGANATNYSKTEKDNKAAYVTAHFSKNIVTAEASIRSDDDSAFGKHNTWNLGLGIAPSDYVEFIASTGTGFKAPTFNDLYWPSSGNPNLKPETSKSSEVGIRSYLPFVQIDISAYRNEIEDMIDWAPTGPGGAWTPSNIDNAKIEGIEIEALFETGVIEHRVSAEWKDPRDKSDDSFLIRRARENFSWVSTYSADRFGFSAVANYVGDRKDSTGKTMDAYTLLDISANYKMTEALTLGARVGNLFDKEYQTAHSSGGKYYVGEGRNWFATVNYRF.

An N-terminal signal peptide occupies residues 1–22 (MQKSLLAIAMASLLTPISYLHA). Residues 29–36 (DTVVVTAN) carry the TonB box motif. The TBDR plug domain maps to 41 to 154 (VESSVLASIS…IGGVIHIKTI (114 aa)). Residues 159–613 (QTKHDANLGY…NWFATVNYRF (455 aa)) enclose the TBDR beta-barrel domain. Residues 591–613 (HSSGGKYYVGEGRNWFATVNYRF) carry the TonB C-terminal box motif.

Belongs to the TonB-dependent receptor family. BtuB (TC 1.B.14.3.1) subfamily.

Its subcellular location is the cell outer membrane. Its function is as follows. Involved in the active translocation of vitamin B12 (cyanocobalamin) across the outer membrane to the periplasmic space. It derives its energy for transport by interacting with the trans-periplasmic membrane protein TonB. This Vibrio vulnificus (strain YJ016) protein is Vitamin B12 transporter BtuB.